We begin with the raw amino-acid sequence, 118 residues long: Large ribosomal subunit protein uL22 (118 aa).

The protein belongs to the universal ribosomal protein uL22 family. Part of the 50S ribosomal subunit.

Functionally, this protein binds specifically to 23S rRNA; its binding is stimulated by other ribosomal proteins, e.g. L4, L17, and L20. It is important during the early stages of 50S assembly. It makes multiple contacts with different domains of the 23S rRNA in the assembled 50S subunit and ribosome. Its function is as follows. The globular domain of the protein is located near the polypeptide exit tunnel on the outside of the subunit, while an extended beta-hairpin is found that lines the wall of the exit tunnel in the center of the 70S ribosome. This is Large ribosomal subunit protein uL22 from Chlorobium limicola (strain DSM 245 / NBRC 103803 / 6330).